Consider the following 630-residue polypeptide: Probable potassium transport system protein Kup (630 aa).

The next 12 membrane-spanning stretches (helical) occupy residues 17-37 (LAIAAIGVVFGDIGTSPLYSL), 51-71 (PSAILGVISLLFWAIILVVGI), 105-125 (ITGLMMALGIFGACMFYGDAV), 144-164 (PQLSHLVLPITIVILIALFWI), 175-195 (LFGPIMVLWFVTIAVLGIYHI), 218-238 (VLLAYVVLGSVVLVLTGAEAL), 255-275 (YVLVMPSLVLNYFGQGALLLL), 283-303 (PFFLLAPQWAALPLVVLSTVA), 344-364 (IYVPVVNWLLLFVILCIVIGF), 374-394 (YGIAVTATMVITTILAAVVMV), 402-422 (LLVAMIIGVFLVIDLGFFGAN), and 428-448 (QGGWLPLGIGALLFFLLMTWY).

This sequence belongs to the HAK/KUP transporter (TC 2.A.72) family.

It is found in the cell inner membrane. The enzyme catalyses K(+)(in) + H(+)(in) = K(+)(out) + H(+)(out). Transport of potassium into the cell. Likely operates as a K(+):H(+) symporter. The sequence is that of Probable potassium transport system protein Kup from Burkholderia pseudomallei (strain K96243).